The primary structure comprises 152 residues: Large ribosomal subunit protein uL24 (152 aa).

Positions 128–152 (VVEEKETSKTSEGGGKTIEETEGEK) are disordered.

Belongs to the universal ribosomal protein uL24 family. As to quaternary structure, part of the 50S ribosomal subunit.

Its function is as follows. One of two assembly initiator proteins, it binds directly to the 5'-end of the 23S rRNA, where it nucleates assembly of the 50S subunit. In terms of biological role, located at the polypeptide exit tunnel on the outside of the subunit. In Staphylothermus marinus (strain ATCC 43588 / DSM 3639 / JCM 9404 / F1), this protein is Large ribosomal subunit protein uL24.